The sequence spans 264 residues: Thymidylate synthase (264 aa).

DUMP is bound at residue arginine 21. A (6R)-5,10-methylene-5,6,7,8-tetrahydrofolate-binding site is contributed by histidine 51. Residue 126–127 (RR) coordinates dUMP. The Nucleophile role is filled by cysteine 146. Residues 166–169 (RSAD), asparagine 177, and 207–209 (HLY) contribute to the dUMP site. Aspartate 169 lines the (6R)-5,10-methylene-5,6,7,8-tetrahydrofolate pocket. A (6R)-5,10-methylene-5,6,7,8-tetrahydrofolate-binding site is contributed by alanine 263.

It belongs to the thymidylate synthase family. Bacterial-type ThyA subfamily. As to quaternary structure, homodimer.

The protein resides in the cytoplasm. The catalysed reaction is dUMP + (6R)-5,10-methylene-5,6,7,8-tetrahydrofolate = 7,8-dihydrofolate + dTMP. It functions in the pathway pyrimidine metabolism; dTTP biosynthesis. In terms of biological role, catalyzes the reductive methylation of 2'-deoxyuridine-5'-monophosphate (dUMP) to 2'-deoxythymidine-5'-monophosphate (dTMP) while utilizing 5,10-methylenetetrahydrofolate (mTHF) as the methyl donor and reductant in the reaction, yielding dihydrofolate (DHF) as a by-product. This enzymatic reaction provides an intracellular de novo source of dTMP, an essential precursor for DNA biosynthesis. This chain is Thymidylate synthase, found in Chromobacterium violaceum (strain ATCC 12472 / DSM 30191 / JCM 1249 / CCUG 213 / NBRC 12614 / NCIMB 9131 / NCTC 9757 / MK).